The chain runs to 390 residues: L-seryl-tRNA(Sec) selenium transferase (390 aa).

K225 is subject to N6-(pyridoxal phosphate)lysine.

The protein belongs to the SelA family. Pyridoxal 5'-phosphate serves as cofactor.

It is found in the cytoplasm. It catalyses the reaction L-seryl-tRNA(Sec) + selenophosphate + H(+) = L-selenocysteinyl-tRNA(Sec) + phosphate. The protein operates within aminoacyl-tRNA biosynthesis; selenocysteinyl-tRNA(Sec) biosynthesis; selenocysteinyl-tRNA(Sec) from L-seryl-tRNA(Sec) (bacterial route): step 1/1. In terms of biological role, converts seryl-tRNA(Sec) to selenocysteinyl-tRNA(Sec) required for selenoprotein biosynthesis. In Helicobacter pylori (strain P12), this protein is L-seryl-tRNA(Sec) selenium transferase.